We begin with the raw amino-acid sequence, 178 residues long: Large ribosomal subunit protein uL5 (178 aa).

This sequence belongs to the universal ribosomal protein uL5 family. Part of the 50S ribosomal subunit; part of the 5S rRNA/L5/L18/L25 subcomplex. Contacts the 5S rRNA and the P site tRNA. Forms a bridge to the 30S subunit in the 70S ribosome.

Functionally, this is one of the proteins that bind and probably mediate the attachment of the 5S RNA into the large ribosomal subunit, where it forms part of the central protuberance. In the 70S ribosome it contacts protein S13 of the 30S subunit (bridge B1b), connecting the 2 subunits; this bridge is implicated in subunit movement. Contacts the P site tRNA; the 5S rRNA and some of its associated proteins might help stabilize positioning of ribosome-bound tRNAs. The chain is Large ribosomal subunit protein uL5 from Syntrophomonas wolfei subsp. wolfei (strain DSM 2245B / Goettingen).